Reading from the N-terminus, the 172-residue chain is Ribosome maturation factor RimM (172 aa).

The PRC barrel domain occupies 95–168 (DEGEFYYHQI…RVDVAIMEGL (74 aa)).

Belongs to the RimM family. As to quaternary structure, binds ribosomal protein uS19.

The protein resides in the cytoplasm. Functionally, an accessory protein needed during the final step in the assembly of 30S ribosomal subunit, possibly for assembly of the head region. Essential for efficient processing of 16S rRNA. May be needed both before and after RbfA during the maturation of 16S rRNA. It has affinity for free ribosomal 30S subunits but not for 70S ribosomes. The polypeptide is Ribosome maturation factor RimM (Streptococcus uberis (strain ATCC BAA-854 / 0140J)).